Reading from the N-terminus, the 687-residue chain is MAAFTFENFLSGAYTGLPIDKFRALGLNTEDYDEQRWEMLVKCVDSGLMQFSCSRDEALVLLWNEEELPKDDDDEVPYEVPCWTPDTDATVIDDVSEWLAEKTSVRDTVVVCSDYDAVSETPVEVLSVELEEDSEEDTIADVCLDARRKSFRDYFTIVEEEFVEEDPLISLNDGNVCPVRTHEVTSLEKPVMLDVGRRCDRVNLESLQGAINMNLPSHAYFDDTWHQYFVEGSKLDVDFDNIRLRQSEVFCDRDLDRYYQPELFAGASSRRIGTQKEALVAIRKRNADVPELADSVDVERLSESVAKKFLSSYVCDLKPVVGVMEKMRAYHQKWGDKIDPMFLLKEHNLQRYEHMIKTDVKPTVAHSMHVERAIPATITFHGKSICAGFSPSFTALFDEFQKSLDERVVIPSGPISTIEMDFDIRNKYYLEVDLSKFDKSQGLLHLEFQRKILCKIGLPAHLANWWCDFHYKSFISDPRAKVSFNCSFQRRTGDAFTFFGNTLVTMAMFSFCYDTRQFEKMLFAGDDSLAISSSPIVGCSDYFVSLFNMEAKIMDPGVPYICSKFLVSDELGRCFSAPDPIREFQRLGKKKISADNDDALFEQYVGFKDRMSHMRNFSEYEIQQLKIFFNLKYKQSGEVIEDYMGACMFYSDNFKNFKTLFTKTCAPLVAALNKRVKDKPFRLPPSL.

One can recognise a RdRp catalytic domain in the interval 427–540 (KYYLEVDLSK…ISSSPIVGCS (114 aa)).

Belongs to the ssRNA positive-strand viruses RNA-directed RNA polymerase family. Interacts with replication protein 1a.

The enzyme catalyses RNA(n) + a ribonucleoside 5'-triphosphate = RNA(n+1) + diphosphate. Functionally, RNA-dependent RNA polymerase which replicates the viral genome composed of 3 RNA segments, RNA1, RNA2 and RNA3. The sequence is that of RNA-directed RNA polymerase 2a from Solanum lycopersicum (Tomato).